Here is a 384-residue protein sequence, read N- to C-terminus: Probable 2-heptyl-3-hydroxy-4(1H)-quinolone synthase AqdB2 (384 aa).

This sequence belongs to the 3-hydroxybenzoate 6-hydroxylase family.

The enzyme catalyses 2-heptyl-4(1H)-quinolone + NADH + O2 + H(+) = 2-heptyl-3-hydroxy-4(1H)-quinolone + NAD(+) + H2O. Functionally, involved in the degradation of the Pseudomonas aeruginosa quorum sensing signal molecule HHQ (2-heptyl-4-quinolone) to anthranilic acid. Probably catalyzes the hydroxylation of HHQ to PQS (2-heptyl-3-hydroxy-4-quinolone). This is Probable 2-heptyl-3-hydroxy-4(1H)-quinolone synthase AqdB2 from Rhodococcus erythropolis (Arthrobacter picolinophilus).